A 269-amino-acid chain; its full sequence is Sushi domain-containing protein 3 (269 aa).

The tract at residues 1-23 is disordered; it reads MRRTSATLRGRARPRWRAGNTTP. Topologically, residues 1–103 are extracellular; that stretch reads MRRTSATLRG…VPPHETFGFK (103 aa). A Sushi domain is found at 30–93; that stretch reads GTCAQLHPPP…WSSGSPVCKA (64 aa). 2 disulfide bridges follow: cysteine 32–cysteine 75 and cysteine 61–cysteine 91. Residues 104–124 traverse the membrane as a helical segment; the sequence is VAVIASIVSCAIILLMSMAFL. Residues 125 to 269 lie on the Cytoplasmic side of the membrane; sequence TCCLLKCVQK…PGRPKVYLPG (145 aa). Residues 171 to 237 form a disordered region; the sequence is NNSSSVGGGN…RMGTPGPGGC (67 aa). Gly residues predominate over residues 176–190; it reads VGGGNGGPSGGGGKP.

Its subcellular location is the cell membrane. The sequence is that of Sushi domain-containing protein 3 (Susd3) from Mus musculus (Mouse).